The following is a 141-amino-acid chain: Hemoglobin subunit alpha-A (141 aa).

Positions 1–141 constitute a Globin domain; it reads VLSASDKSNV…VGTVLTAKYR (141 aa). His58 contacts O2. His87 is a binding site for heme b.

It belongs to the globin family. Heterotetramer of two alpha chains and two beta chains. In terms of tissue distribution, red blood cells.

Functionally, involved in oxygen transport from the lung to the various peripheral tissues. The sequence is that of Hemoglobin subunit alpha-A (HBAA) from Streptopelia orientalis (Eastern turtle dove).